The sequence spans 227 residues: Phosphoglycolate phosphatase (227 aa).

Residue Asp11 is the Nucleophile of the active site. Residues Asp11, Asp13, and Asp176 each coordinate Mg(2+).

The protein belongs to the HAD-like hydrolase superfamily. CbbY/CbbZ/Gph/YieH family. Requires Mg(2+) as cofactor.

It catalyses the reaction 2-phosphoglycolate + H2O = glycolate + phosphate. The protein operates within organic acid metabolism; glycolate biosynthesis; glycolate from 2-phosphoglycolate: step 1/1. Functionally, specifically catalyzes the dephosphorylation of 2-phosphoglycolate. Is involved in the dissimilation of the intracellular 2-phosphoglycolate formed during the DNA repair of 3'-phosphoglycolate ends, a major class of DNA lesions induced by oxidative stress. In Aliivibrio fischeri (strain ATCC 700601 / ES114) (Vibrio fischeri), this protein is Phosphoglycolate phosphatase.